The following is a 530-amino-acid chain: MFSLQNLCRKTLPDCKLPEFFDEYILQLLGLYWENHGTIQRAGNNCVLIQQHNLIPVNEALRIAASEENYEIVSLLLAWEGNLYYAIIGALEGNRPDLIRKYDDQIKDHHEILPFIDDPIIFHKCHIMRRCFFNCILYQAVKYSKFRVLLYFKHRLGDDLPLTHLLIEKACEDHNYEVIKWIYENLHSYNIMDTFECAIAHKDLRLYCLGYTFIYNRIVPYKYHHLDICILSSLQLLHKVAAKGYLDFILETLKYDHNINNIDIILTQAATYNHRKILTYFIPQLTYAQIEQCLLVAIKTKASKKTLNLLLSHLNLSIKLIKKISQYVVTYNSTNIISILSMRRKKKIYLDIILTEFVKNAIFNKFVVRCMDTFSINPERIVKMAARINRMMLVKNISERVWKNHAVKLKHLKHAVHTMKHQEGKNRLMNFIYDHCYYHMQGEEIFGLARFYAIHHAPKLFDVFYDCCMLDATRFKSLLLDCPHIIGKNAYDAGINLVNKYIGNLFAMGVLSKKEILQDYPSIYSKHDMF.

It belongs to the asfivirus MGF 505 family.

Functionally, plays a role in virus cell tropism, and may be required for efficient virus replication in macrophages. The polypeptide is Protein MGF 505-1R (African swine fever virus (isolate Tick/Malawi/Lil 20-1/1983) (ASFV)).